The sequence spans 148 residues: MDIIIENRKVRFNYFIIQEFDAGIVLIGSEVKSLRQRKVSIAESYVTERNMELWLCNLHISEYTQANTKNHNPTRPRKLLLKKKQIYKISGNMKNDGFTVVPLFLYFNDKGIAKAKIVIVKGKKLHDKRETIKARDWNREKNRILRGG.

The protein belongs to the SmpB family.

It localises to the cytoplasm. Required for rescue of stalled ribosomes mediated by trans-translation. Binds to transfer-messenger RNA (tmRNA), required for stable association of tmRNA with ribosomes. tmRNA and SmpB together mimic tRNA shape, replacing the anticodon stem-loop with SmpB. tmRNA is encoded by the ssrA gene; the 2 termini fold to resemble tRNA(Ala) and it encodes a 'tag peptide', a short internal open reading frame. During trans-translation Ala-aminoacylated tmRNA acts like a tRNA, entering the A-site of stalled ribosomes, displacing the stalled mRNA. The ribosome then switches to translate the ORF on the tmRNA; the nascent peptide is terminated with the 'tag peptide' encoded by the tmRNA and targeted for degradation. The ribosome is freed to recommence translation, which seems to be the essential function of trans-translation. The protein is SsrA-binding protein of Ehrlichia ruminantium (strain Gardel).